The primary structure comprises 177 residues: MSRIGKKPISVPSGVTATVEGQLVKAKGPKGELSYLVNDEVLVKLEESFISVSPRDQSKDARSKWGMSRSMIENIFCGVKDGFEKRLEINGVGYRAALQGKDIQLSLGFSHDVIYKVPSGVTVSIPKPTEIVVSGIDKQQVGQVAAEIREYRRPEPYKGKGIKHADERIFRKEGKKK.

Belongs to the universal ribosomal protein uL6 family. In terms of assembly, part of the 50S ribosomal subunit.

In terms of biological role, this protein binds to the 23S rRNA, and is important in its secondary structure. It is located near the subunit interface in the base of the L7/L12 stalk, and near the tRNA binding site of the peptidyltransferase center. The sequence is that of Large ribosomal subunit protein uL6 from Bartonella henselae (strain ATCC 49882 / DSM 28221 / CCUG 30454 / Houston 1) (Rochalimaea henselae).